The sequence spans 730 residues: Ribosomal RNA large subunit methyltransferase K/L (730 aa).

A THUMP domain is found at 46 to 157; the sequence is TAYRLCVWSR…RGEAILSLDL (112 aa). Positions 395-418 are disordered; sequence ERREAQPEGTEVRQQAPQASEPAR.

This sequence belongs to the methyltransferase superfamily. RlmKL family.

The protein localises to the cytoplasm. The enzyme catalyses guanosine(2445) in 23S rRNA + S-adenosyl-L-methionine = N(2)-methylguanosine(2445) in 23S rRNA + S-adenosyl-L-homocysteine + H(+). It catalyses the reaction guanosine(2069) in 23S rRNA + S-adenosyl-L-methionine = N(2)-methylguanosine(2069) in 23S rRNA + S-adenosyl-L-homocysteine + H(+). Functionally, specifically methylates the guanine in position 2445 (m2G2445) and the guanine in position 2069 (m7G2069) of 23S rRNA. This Pseudomonas putida (strain GB-1) protein is Ribosomal RNA large subunit methyltransferase K/L.